The chain runs to 431 residues: Histidinol dehydrogenase (431 aa).

Residues Tyr-130, Gln-191, and Asn-214 each coordinate NAD(+). Substrate-binding residues include Ser-237, Gln-259, and His-262. Positions 259 and 262 each coordinate Zn(2+). Active-site proton acceptor residues include Glu-327 and His-328. Residues His-328, Asp-361, Glu-415, and His-420 each contribute to the substrate site. Asp-361 is a Zn(2+) binding site. His-420 contributes to the Zn(2+) binding site.

The protein belongs to the histidinol dehydrogenase family. It depends on Zn(2+) as a cofactor.

It carries out the reaction L-histidinol + 2 NAD(+) + H2O = L-histidine + 2 NADH + 3 H(+). The protein operates within amino-acid biosynthesis; L-histidine biosynthesis; L-histidine from 5-phospho-alpha-D-ribose 1-diphosphate: step 9/9. Catalyzes the sequential NAD-dependent oxidations of L-histidinol to L-histidinaldehyde and then to L-histidine. The protein is Histidinol dehydrogenase of Bradyrhizobium diazoefficiens (strain JCM 10833 / BCRC 13528 / IAM 13628 / NBRC 14792 / USDA 110).